Consider the following 592-residue polypeptide: Protein kinase C zeta type (592 aa).

The region spanning 15-98 (RVRLKAHYGG…EVLIIHVFPS (84 aa)) is the PB1 domain. Residues 79-145 (AFRLACQGRD…KRFNRRAYCG (67 aa)) form an interaction with SQSTM1 region. Residues 130–180 (GHLFQAKRFNRRAYCGQCSERIWGLARQGYRCINCKLLVHKRCHVLVPLTC) form a Phorbol-ester/DAG-type zinc finger. Residues 252 to 518 (FDLIRVIGRG…FSDIKSHAFF (267 aa)) enclose the Protein kinase domain. Residues 258 to 266 (IGRGSYAKV) and Lys281 each bind ATP. Catalysis depends on Asp376, which acts as the Proton acceptor. Thr410 is subject to Phosphothreonine; by PDPK1 and PI3K. The AGC-kinase C-terminal domain occupies 519–590 (RSIDWDLLEK…INPLLLSAEE (72 aa)). Phosphothreonine is present on Thr560. At Ser591 the chain carries Phosphoserine.

This sequence belongs to the protein kinase superfamily. AGC Ser/Thr protein kinase family. PKC subfamily. In terms of assembly, interacts with PARD6A, PARD6B and PARD6G. Part of a complex with PARD3, PARD6A or PARD6B or PARD6G and CDC42 or RAC1. Interacts with ADAP1/CENTA1. Forms a ternary complex with SQSTM1 and KCNAB2. Forms another ternary complex with SQSTM1 and GABRR3. Forms a complex with SQSTM1 and MAP2K5. Interacts (via the protein kinase domain) with WWC1. Forms a tripartite complex with WWC1 and DDR1, but predominantly in the absence of collagen. Component of the Par polarity complex, composed of at least phosphorylated PRKCZ, PARD3 and TIAM1. Interacts with PDPK1 (via N-terminal region). Interacts with WDFY2 (via WD repeats 1-3). Interacts with VAMP2. Forms a complex with WDFY2 and VAMP2. Interacts with APPL1. Interacts with WWC1, WWC2 and WWC3. Post-translationally, CDH5 is required for its phosphorylation at Thr-410. Phosphorylated by protein kinase PDPK1; phosphorylation is inhibited by the apoptotic C-terminal cleavage product of PKN2. Phosphorylation at Thr-410 by PI3K activates the kinase. Isoform 1: In brain, expressed in hippocampus, neocortex and cerebellum (at protein level). Also expressed in lung, liver, kidney, testis and to a lesser extent in pancreas, intestine and skin (at protein level). Isoform 2: Specifically expressed in brain where it localizes to the hippocampus, neocortex and cerebellum (at protein level).

Its subcellular location is the cytoplasm. The protein localises to the endosome. The protein resides in the cell junction. It localises to the membrane. It carries out the reaction L-seryl-[protein] + ATP = O-phospho-L-seryl-[protein] + ADP + H(+). The enzyme catalyses L-threonyl-[protein] + ATP = O-phospho-L-threonyl-[protein] + ADP + H(+). With respect to regulation, atypical PKCs (PRKCI and PRKCZ) exhibit an elevated basal enzymatic activity (that may be due to the interaction with SMG1 or SQSTM1) and are not regulated by diacylglycerol, phosphatidylserine, phorbol esters or calcium ions. Two specific sites, Thr-410 (activation loop of the kinase domain) and Thr-560 (turn motif), need to be phosphorylated for its full activation. Phosphatidylinositol 3,4,5-trisphosphate might be a physiological activator. Isoform 2: Constitutively active. Its function is as follows. Calcium- and diacylglycerol-independent serine/threonine-protein kinase that functions in phosphatidylinositol 3-kinase (PI3K) pathway and mitogen-activated protein (MAP) kinase cascade, and is involved in NF-kappa-B activation, mitogenic signaling, cell proliferation, cell polarity, inflammatory response and maintenance of long-term potentiation (LTP). Upon lipopolysaccharide (LPS) treatment in macrophages, or following mitogenic stimuli, functions downstream of PI3K to activate MAP2K1/MEK1-MAPK1/ERK2 signaling cascade independently of RAF1 activation. Required for insulin-dependent activation of AKT3, but may function as an adapter rather than a direct activator. Upon insulin treatment may act as a downstream effector of PI3K and contribute to the activation of translocation of the glucose transporter SLC2A4/GLUT4 and subsequent glucose transport in adipocytes. In EGF-induced cells, binds and activates MAP2K5/MEK5-MAPK7/ERK5 independently of its kinase activity and can activate JUN promoter through MEF2C. Through binding with SQSTM1/p62, functions in interleukin-1 signaling and activation of NF-kappa-B with the specific adapters RIPK1 and TRAF6. Participates in TNF-dependent transactivation of NF-kappa-B by phosphorylating and activating IKBKB kinase, which in turn leads to the degradation of NF-kappa-B inhibitors. In migrating astrocytes, forms a cytoplasmic complex with PARD6A and is recruited by CDC42 to function in the establishment of cell polarity along with the microtubule motor and dynein. In association with FEZ1, stimulates neuronal differentiation in PC12 cells. In the inflammatory response, is required for the T-helper 2 (Th2) differentiation process, including interleukin production, efficient activation of JAK1 and the subsequent phosphorylation and nuclear translocation of STAT6. May be involved in development of allergic airway inflammation (asthma), a process dependent on Th2 immune response. In the NF-kappa-B-mediated inflammatory response, can relieve SETD6-dependent repression of NF-kappa-B target genes by phosphorylating the RELA subunit at 'Ser-311'. Phosphorylates VAMP2 in vitro. Phosphorylates and activates LRRK1, which phosphorylates RAB proteins involved in intracellular trafficking. Involved in late synaptic long term potentiation phase in CA1 hippocampal cells and long term memory maintenance. The sequence is that of Protein kinase C zeta type (Prkcz) from Rattus norvegicus (Rat).